A 161-amino-acid chain; its full sequence is Endoribonuclease YbeY (161 aa).

Positions 120, 124, and 130 each coordinate Zn(2+).

The protein belongs to the endoribonuclease YbeY family. Requires Zn(2+) as cofactor.

It is found in the cytoplasm. Its function is as follows. Single strand-specific metallo-endoribonuclease involved in late-stage 70S ribosome quality control and in maturation of the 3' terminus of the 16S rRNA. This Chlamydia muridarum (strain MoPn / Nigg) protein is Endoribonuclease YbeY.